A 570-amino-acid chain; its full sequence is Probable diguanylate cyclase DgcQ (570 aa).

A run of 2 helical transmembrane segments spans residues 20-40 and 360-380; these read FGPGHVVNTCFLIVMLFSTLL and IALTLLWVLFTAMLLISWGVI. The GGDEF domain occupies 428–563; sequence QPFSVIQLDL…GRNRICASDA (136 aa). Asp436 serves as a coordination point for Mg(2+). Residues Asn444, His449, and Asp453 each coordinate substrate. Mg(2+) is bound at residue Glu479. The active-site Proton acceptor is Glu479.

As to quaternary structure, homodimer. The cofactor is Mg(2+).

Its subcellular location is the cell inner membrane. The enzyme catalyses 2 GTP = 3',3'-c-di-GMP + 2 diphosphate. It functions in the pathway glycan metabolism; bacterial cellulose biosynthesis. The protein operates within purine metabolism; 3',5'-cyclic di-GMP biosynthesis. Catalyzes the synthesis of cyclic-di-GMP (c-di-GMP) via the condensation of 2 GTP molecules. Cyclic-di-GMP is a second messenger which controls cell surface-associated traits in bacteria. Involved in the regulation of cellulose production. The chain is Probable diguanylate cyclase DgcQ from Salmonella choleraesuis (strain SC-B67).